The sequence spans 477 residues: Trigger factor (477 aa).

The PPIase FKBP-type domain occupies 174–261 (GDIAVVSFKG…LKDLKEKELP (88 aa)). Residues 435–477 (VNEKTTKTSKATKTSKTTKATKTATKTTKTTKTTKTQNKKEKK) are disordered. The segment covering 442–470 (TSKATKTSKTTKATKTATKTTKTTKTTKT) has biased composition (low complexity).

The protein belongs to the FKBP-type PPIase family. Tig subfamily.

It is found in the cytoplasm. It carries out the reaction [protein]-peptidylproline (omega=180) = [protein]-peptidylproline (omega=0). In terms of biological role, involved in protein export. Acts as a chaperone by maintaining the newly synthesized protein in an open conformation. Functions as a peptidyl-prolyl cis-trans isomerase. The chain is Trigger factor from Prochlorococcus marinus (strain MIT 9301).